The sequence spans 296 residues: NAD kinase (296 aa).

Asp78 functions as the Proton acceptor in the catalytic mechanism. NAD(+) is bound by residues Asp78–Gly79, Asn152–Asp153, Arg180, Asp182, and Gln251.

The protein belongs to the NAD kinase family. A divalent metal cation is required as a cofactor.

It localises to the cytoplasm. It catalyses the reaction NAD(+) + ATP = ADP + NADP(+) + H(+). Involved in the regulation of the intracellular balance of NAD and NADP, and is a key enzyme in the biosynthesis of NADP. Catalyzes specifically the phosphorylation on 2'-hydroxyl of the adenosine moiety of NAD to yield NADP. The polypeptide is NAD kinase (Neisseria meningitidis serogroup C (strain 053442)).